The sequence spans 331 residues: MQNHNNRIVITPGEPAGVGPDLVIALAQQDWPVELVVCADPALLLTRASQLNLPLQLREYQQDKPALAQLAGTLTILPVKIAAEVIPGQLDVKNSHYVVETLAKACDGAISGEFAALVTGPVQKSIINDAGIPFIGHTEFFADRSHCSRVVMMLATEELRVALATTHLPLLAVPGAITQTSLHEVISILDNDLKTKFGISQPQIYVCGLNPHAGEGGHMGHEEIETIIPALATLRQQGINLIGPLPADTLFQPKYLQHADAVLAMYHDQGLPVLKYQGFGRAVNITLGLPFIRTSVDHGTALELAATGTADVGSFITALNLAIKMINNSNE.

Positions 137 and 138 each coordinate substrate. A divalent metal cation contacts are provided by His-167, His-212, and His-267. Substrate contacts are provided by Lys-275, Asn-284, and Arg-293.

This sequence belongs to the PdxA family. Homodimer. Requires Zn(2+) as cofactor. Mg(2+) is required as a cofactor. It depends on Co(2+) as a cofactor.

Its subcellular location is the cytoplasm. The enzyme catalyses 4-(phosphooxy)-L-threonine + NAD(+) = 3-amino-2-oxopropyl phosphate + CO2 + NADH. Its pathway is cofactor biosynthesis; pyridoxine 5'-phosphate biosynthesis; pyridoxine 5'-phosphate from D-erythrose 4-phosphate: step 4/5. Functionally, catalyzes the NAD(P)-dependent oxidation of 4-(phosphooxy)-L-threonine (HTP) into 2-amino-3-oxo-4-(phosphooxy)butyric acid which spontaneously decarboxylates to form 3-amino-2-oxopropyl phosphate (AHAP). The protein is 4-hydroxythreonine-4-phosphate dehydrogenase of Yersinia enterocolitica serotype O:8 / biotype 1B (strain NCTC 13174 / 8081).